Consider the following 258-residue polypeptide: 4,5-dihydroxyphthalate decarboxylase (258 aa).

To P.testosteroni DHP decarboxylase.

It carries out the reaction 4,5-dihydroxyphthalate + H(+) = 3,4-dihydroxybenzoate + CO2. The protein operates within xenobiotic degradation; phthalate degradation; 3,4-dihydroxybenzoate from phthalate: step 3/3. This is 4,5-dihydroxyphthalate decarboxylase (pht5) from Pseudomonas putida (Arthrobacter siderocapsulatus).